We begin with the raw amino-acid sequence, 34 residues long: Somatostatin (34 aa).

Residues 1-20 are disordered; that stretch reads AVERPRQDGQVHEPPGRERK. A disulfide bond links Cys23 and Cys34.

This sequence belongs to the somatostatin family.

It is found in the secreted. In terms of biological role, somatostatin inhibits the release of somatotropin. This Myxine glutinosa (Atlantic hagfish) protein is Somatostatin (sst).